A 225-amino-acid polypeptide reads, in one-letter code: PKHD-type hydroxylase Smal_0990 (225 aa).

The Fe2OG dioxygenase domain occupies 78-177 (KYLPPRFNRY…RVASFFWVQS (100 aa)). Residues His-96, Asp-98, and His-158 each coordinate Fe cation. 2-oxoglutarate is bound at residue Arg-168.

It depends on Fe(2+) as a cofactor. The cofactor is L-ascorbate.

The protein is PKHD-type hydroxylase Smal_0990 of Stenotrophomonas maltophilia (strain R551-3).